The sequence spans 425 residues: Enolase (425 aa).

Glutamine 162 is a binding site for (2R)-2-phosphoglycerate. The Proton donor role is filled by glutamate 204. Mg(2+) contacts are provided by aspartate 241, glutamate 282, and aspartate 309. (2R)-2-phosphoglycerate-binding residues include lysine 334, arginine 363, serine 364, and lysine 385. Lysine 334 serves as the catalytic Proton acceptor.

It belongs to the enolase family. Mg(2+) serves as cofactor.

It is found in the cytoplasm. The protein resides in the secreted. Its subcellular location is the cell surface. The catalysed reaction is (2R)-2-phosphoglycerate = phosphoenolpyruvate + H2O. Its pathway is carbohydrate degradation; glycolysis; pyruvate from D-glyceraldehyde 3-phosphate: step 4/5. In terms of biological role, catalyzes the reversible conversion of 2-phosphoglycerate (2-PG) into phosphoenolpyruvate (PEP). It is essential for the degradation of carbohydrates via glycolysis. The chain is Enolase from Corynebacterium urealyticum (strain ATCC 43042 / DSM 7109).